We begin with the raw amino-acid sequence, 446 residues long: Maltoporin (446 aa).

A signal peptide spans 1–25 (MMITLRKLPLAVAVAAGVMSAQAMA).

Belongs to the porin LamB (TC 1.B.3) family. Homotrimer formed of three 18-stranded antiparallel beta-barrels, containing three independent channels.

The protein resides in the cell outer membrane. It carries out the reaction beta-maltose(in) = beta-maltose(out). In terms of biological role, involved in the transport of maltose and maltodextrins. This Escherichia coli (strain SE11) protein is Maltoporin.